Here is a 908-residue protein sequence, read N- to C-terminus: Protein translocase subunit SecA (908 aa).

ATP is bound by residues Gln87, 105–109 (GEGKT), and Asp512. A disordered region spans residues 866 to 908 (GSDEDDAIAAHTPMIRDGDKVGRNDPCPCGSGRKYKQCHGKLS). Basic and acidic residues predominate over residues 879–888 (MIRDGDKVGR). Zn(2+)-binding residues include Cys892, Cys894, Cys903, and His904. Positions 898–908 (RKYKQCHGKLS) are enriched in basic residues.

Belongs to the SecA family. Monomer and homodimer. Part of the essential Sec protein translocation apparatus which comprises SecA, SecYEG and auxiliary proteins SecDF-YajC and YidC. It depends on Zn(2+) as a cofactor.

Its subcellular location is the cell inner membrane. The protein resides in the cytoplasm. The enzyme catalyses ATP + H2O + cellular proteinSide 1 = ADP + phosphate + cellular proteinSide 2.. Its function is as follows. Part of the Sec protein translocase complex. Interacts with the SecYEG preprotein conducting channel. Has a central role in coupling the hydrolysis of ATP to the transfer of proteins into and across the cell membrane, serving both as a receptor for the preprotein-SecB complex and as an ATP-driven molecular motor driving the stepwise translocation of polypeptide chains across the membrane. This is Protein translocase subunit SecA from Shewanella oneidensis (strain ATCC 700550 / JCM 31522 / CIP 106686 / LMG 19005 / NCIMB 14063 / MR-1).